The primary structure comprises 420 residues: Glucose-1-phosphate adenylyltransferase (420 aa).

Residues Tyr107, Gly173, 188-189 (EK), and Ser206 each bind alpha-D-glucose 1-phosphate.

Belongs to the bacterial/plant glucose-1-phosphate adenylyltransferase family. In terms of assembly, homotetramer.

The enzyme catalyses alpha-D-glucose 1-phosphate + ATP + H(+) = ADP-alpha-D-glucose + diphosphate. It functions in the pathway glycan biosynthesis; glycogen biosynthesis. Its function is as follows. Involved in the biosynthesis of ADP-glucose, a building block required for the elongation reactions to produce glycogen. Catalyzes the reaction between ATP and alpha-D-glucose 1-phosphate (G1P) to produce pyrophosphate and ADP-Glc. This is Glucose-1-phosphate adenylyltransferase from Shewanella frigidimarina (strain NCIMB 400).